We begin with the raw amino-acid sequence, 141 residues long: Nucleoside diphosphate kinase (141 aa).

ATP contacts are provided by K11, F59, R87, T93, R104, and N114. The Pros-phosphohistidine intermediate role is filled by H117.

This sequence belongs to the NDK family. As to quaternary structure, homotetramer. The cofactor is Mg(2+).

Its subcellular location is the cytoplasm. It carries out the reaction a 2'-deoxyribonucleoside 5'-diphosphate + ATP = a 2'-deoxyribonucleoside 5'-triphosphate + ADP. The catalysed reaction is a ribonucleoside 5'-diphosphate + ATP = a ribonucleoside 5'-triphosphate + ADP. In terms of biological role, major role in the synthesis of nucleoside triphosphates other than ATP. The ATP gamma phosphate is transferred to the NDP beta phosphate via a ping-pong mechanism, using a phosphorylated active-site intermediate. This chain is Nucleoside diphosphate kinase, found in Legionella pneumophila (strain Paris).